The chain runs to 120 residues: DNA-binding protein HQ_1105A (120 aa).

Positions 1 to 55 are disordered; the sequence is MSETPDDLDELRQQRMEELRDQADGQQSQTSDNTAAAQEAAREKAEAQQEALLKQ. Over residues 10 to 23 the composition is skewed to basic and acidic residues; that stretch reads ELRQQRMEELRDQA. Over residues 24–34 the composition is skewed to polar residues; the sequence is DGQQSQTSDNT.

Belongs to the PDCD5 family.

In Haloquadratum walsbyi (strain DSM 16790 / HBSQ001), this protein is DNA-binding protein HQ_1105A.